Here is a 355-residue protein sequence, read N- to C-terminus: MIGEKKKCIGLIFGGHSNEHEVSISSAKTVFKAFKAQINRERFTVKAFYINKYGDWLDSDISEKILTGEIENYKTKKQEIFNQEKINFLDGIEFQNIDVWFPLLHGFNGEDGSIHGLIRFTKKPLVGCGIIGSALGMDKILMKTIFSNHKLPQVNYLVFQNEDLNDKQVKNKIINEILKKLKFPVFVKPSNSGSSLGISKVKNESEILLALEKAWGIDPRILIEEGLEVREIECGIIGNSKLITSEIGEVNYESDWYDYDSKYHSNNKIIIPAEIDSKITNEIKEIAIKSCRALNIFGFARVDFFLEKSSNKILLNEINTIPGFTKNSMFPMLWEASGLKIEQLVAKLVDISLDL.

Residues 143 to 350 enclose the ATP-grasp domain; sequence KTIFSNHKLP…IEQLVAKLVD (208 aa). 178-233 contributes to the ATP binding site; sequence LKKLKFPVFVKPSNSGSSLGISKVKNESEILLALEKAWGIDPRILIEEGLEVREIE. The Mg(2+) site is built by aspartate 303, glutamate 317, and asparagine 319.

This sequence belongs to the D-alanine--D-alanine ligase family. Mg(2+) serves as cofactor. The cofactor is Mn(2+).

The protein localises to the cytoplasm. The catalysed reaction is 2 D-alanine + ATP = D-alanyl-D-alanine + ADP + phosphate + H(+). It functions in the pathway cell wall biogenesis; peptidoglycan biosynthesis. Functionally, cell wall formation. The polypeptide is D-alanine--D-alanine ligase (Prochlorococcus marinus (strain MIT 9301)).